The sequence spans 101 residues: Urease subunit beta (101 aa).

The protein belongs to the urease beta subunit family. In terms of assembly, heterotrimer of UreA (gamma), UreB (beta) and UreC (alpha) subunits. Three heterotrimers associate to form the active enzyme.

It localises to the cytoplasm. The enzyme catalyses urea + 2 H2O + H(+) = hydrogencarbonate + 2 NH4(+). Its pathway is nitrogen metabolism; urea degradation; CO(2) and NH(3) from urea (urease route): step 1/1. In Haemophilus influenzae (strain 86-028NP), this protein is Urease subunit beta.